The primary structure comprises 150 residues: Transcription antitermination protein NusB (150 aa).

The protein belongs to the NusB family.

In terms of biological role, involved in transcription antitermination. Required for transcription of ribosomal RNA (rRNA) genes. Binds specifically to the boxA antiterminator sequence of the ribosomal RNA (rrn) operons. This Saccharophagus degradans (strain 2-40 / ATCC 43961 / DSM 17024) protein is Transcription antitermination protein NusB.